The chain runs to 191 residues: Glycerol-3-phosphate acyltransferase (191 aa).

The next 5 helical transmembrane spans lie at 5–25, 51–71, 78–98, 114–134, and 153–173; these read IILI…IAKI, LAVL…YTAQ, DLYI…PIWL, IALN…VFFI, and SFFF…LIFL.

This sequence belongs to the PlsY family. As to quaternary structure, probably interacts with PlsX.

Its subcellular location is the cell membrane. The catalysed reaction is an acyl phosphate + sn-glycerol 3-phosphate = a 1-acyl-sn-glycero-3-phosphate + phosphate. It functions in the pathway lipid metabolism; phospholipid metabolism. Its function is as follows. Catalyzes the transfer of an acyl group from acyl-phosphate (acyl-PO(4)) to glycerol-3-phosphate (G3P) to form lysophosphatidic acid (LPA). This enzyme utilizes acyl-phosphate as fatty acyl donor, but not acyl-CoA or acyl-ACP. The sequence is that of Glycerol-3-phosphate acyltransferase from Wolbachia pipientis subsp. Culex pipiens (strain wPip).